The sequence spans 439 residues: Histidinol dehydrogenase (439 aa).

NAD(+) contacts are provided by Tyr127, Gln185, and Asn208. Residues Ser234, Gln256, and His259 each contribute to the substrate site. Zn(2+) contacts are provided by Gln256 and His259. Residues Glu323 and His324 each act as proton acceptor in the active site. Substrate is bound by residues His324, Asp357, Glu411, and His416. Residue Asp357 participates in Zn(2+) binding. His416 is a Zn(2+) binding site.

Belongs to the histidinol dehydrogenase family. Zn(2+) serves as cofactor.

The enzyme catalyses L-histidinol + 2 NAD(+) + H2O = L-histidine + 2 NADH + 3 H(+). It participates in amino-acid biosynthesis; L-histidine biosynthesis; L-histidine from 5-phospho-alpha-D-ribose 1-diphosphate: step 9/9. In terms of biological role, catalyzes the sequential NAD-dependent oxidations of L-histidinol to L-histidinaldehyde and then to L-histidine. This Aliivibrio fischeri (strain ATCC 700601 / ES114) (Vibrio fischeri) protein is Histidinol dehydrogenase.